A 102-amino-acid chain; its full sequence is NADH-quinone oxidoreductase subunit K (102 aa).

Helical transmembrane passes span 6 to 26, 30 to 50, and 62 to 82; these read LEHGLALASVLFALGLVGLMV, ILFVLMSLEVMMNAAALAFVV, and VMFILVLSLAAAEASIGLAIL.

It belongs to the complex I subunit 4L family. In terms of assembly, NDH-1 is composed of 13 different subunits. Subunits NuoA, H, J, K, L, M, N constitute the membrane sector of the complex.

The protein localises to the cell inner membrane. It catalyses the reaction a quinone + NADH + 5 H(+)(in) = a quinol + NAD(+) + 4 H(+)(out). In terms of biological role, NDH-1 shuttles electrons from NADH, via FMN and iron-sulfur (Fe-S) centers, to quinones in the respiratory chain. The immediate electron acceptor for the enzyme in this species is believed to be ubiquinone. Couples the redox reaction to proton translocation (for every two electrons transferred, four hydrogen ions are translocated across the cytoplasmic membrane), and thus conserves the redox energy in a proton gradient. In Pseudomonas aeruginosa (strain LESB58), this protein is NADH-quinone oxidoreductase subunit K.